A 1621-amino-acid polypeptide reads, in one-letter code: ABC transporter A family member 2 (1621 aa).

The next 7 membrane-spanning stretches (helical) occupy residues 30-50 (ILFP…VMAF), 234-254 (SVFI…DLVI), 276-296 (ISWM…ISII), 309-329 (GVVI…AFIL), 338-358 (FCGL…IFVA), 365-385 (GAKL…IFAM), and 405-425 (NQVI…VWYL). In terms of domain architecture, ABC transporter 1 spans 484–717 (ISIRNLRKEY…FGCGYLLTCS (234 aa)). 520 to 527 (GPNGSGKS) is a binding site for ATP. Helical transmembrane passes span 856–876 (FFLT…MYKA), 1033–1053 (IVYF…SFAG), 1083–1103 (VWDY…LAGI), 1111–1131 (FGLM…LSYL), 1142–1162 (ATGA…IISL), 1183–1203 (VDIV…LFLV), and 1227–1247 (GSPM…IMIL). An ABC transporter 2 domain is found at 1293-1528 (LQFRNLHKLF…FGAGYTFDVK (236 aa)). 1331–1338 (GLNGAGKT) is an ATP binding site.

It belongs to the ABC transporter superfamily. ABCA family.

It is found in the membrane. The chain is ABC transporter A family member 2 (abcA2) from Dictyostelium discoideum (Social amoeba).